A 513-amino-acid chain; its full sequence is ATP synthase subunit alpha (513 aa).

169–176 (GDRQIGKT) serves as a coordination point for ATP.

It belongs to the ATPase alpha/beta chains family. In terms of assembly, F-type ATPases have 2 components, CF(1) - the catalytic core - and CF(0) - the membrane proton channel. CF(1) has five subunits: alpha(3), beta(3), gamma(1), delta(1), epsilon(1). CF(0) has three main subunits: a(1), b(2) and c(9-12). The alpha and beta chains form an alternating ring which encloses part of the gamma chain. CF(1) is attached to CF(0) by a central stalk formed by the gamma and epsilon chains, while a peripheral stalk is formed by the delta and b chains.

It localises to the cell inner membrane. It catalyses the reaction ATP + H2O + 4 H(+)(in) = ADP + phosphate + 5 H(+)(out). In terms of biological role, produces ATP from ADP in the presence of a proton gradient across the membrane. The alpha chain is a regulatory subunit. The chain is ATP synthase subunit alpha from Francisella tularensis subsp. holarctica (strain OSU18).